The primary structure comprises 789 residues: Cadherin-10 (789 aa).

The signal sequence occupies residues 1–22 (MTIQQVLLLLLLWMWLLHPCRT). A propeptide spanning residues 23–54 (EMLFRRTPDLRPKGFVGRTSGSDGKALHRQKR) is cleaved from the precursor. 5 Cadherin domains span residues 55–160 (GWMW…EPTF), 161–269 (PEEI…PPRF), 270–384 (PQST…PPVF), 385–487 (SRSS…DNAP), and 488–606 (QFAV…LLLP). Residues 55–606 (GWMWNQFFLL…SCNAEALLLP (552 aa)) lie on the Extracellular side of the membrane. The N-linked (GlcNAc...) asparagine glycan is linked to Asn-256. Asn-438, Asn-456, and Asn-534 each carry an N-linked (GlcNAc...) asparagine glycan. The chain crosses the membrane as a helical span at residues 607-634 (AGLSTGALIAILLCIIILLVIVVLFAAL). Residues 635-789 (KRQRKKEPLI…GGGESDKDAS (155 aa)) lie on the Cytoplasmic side of the membrane.

It is found in the cell membrane. Cadherins are calcium-dependent cell adhesion proteins. They preferentially interact with themselves in a homophilic manner in connecting cells; cadherins may thus contribute to the sorting of heterogeneous cell types. This chain is Cadherin-10 (CDH10), found in Gallus gallus (Chicken).